Here is a 313-residue protein sequence, read N- to C-terminus: Ribosomal RNA small subunit methyltransferase H (313 aa).

S-adenosyl-L-methionine contacts are provided by residues 35-37 (GGH), Asp-55, Phe-80, Asp-102, and Gln-109.

The protein belongs to the methyltransferase superfamily. RsmH family.

It localises to the cytoplasm. The catalysed reaction is cytidine(1402) in 16S rRNA + S-adenosyl-L-methionine = N(4)-methylcytidine(1402) in 16S rRNA + S-adenosyl-L-homocysteine + H(+). Functionally, specifically methylates the N4 position of cytidine in position 1402 (C1402) of 16S rRNA. The protein is Ribosomal RNA small subunit methyltransferase H of Shewanella violacea (strain JCM 10179 / CIP 106290 / LMG 19151 / DSS12).